Here is a 127-residue protein sequence, read N- to C-terminus: Thioredoxin domain-containing protein 8 (127 aa).

The Thioredoxin domain occupies 1–92 (MVQIIKDTNE…SQKVTLFSRI (92 aa)). The cysteines at positions 32 and 35 are disulfide-linked.

Belongs to the thioredoxin family. In terms of tissue distribution, testis-specific. Only expressed during spermiogenesis, prominently in the Golgi apparatus of pachytene spermatocytes and round and elongated spermatids, with a transient localization in the developing acrosome of round spermatids (at protein level).

It is found in the cytoplasm. Its subcellular location is the golgi apparatus. In terms of biological role, may be required for post-translational modifications of proteins required for acrosomal biogenesis. May act by reducing disulfide bonds within the sperm. In Homo sapiens (Human), this protein is Thioredoxin domain-containing protein 8 (TXNDC8).